Consider the following 416-residue polypeptide: Gamma-glutamyl phosphate reductase (416 aa).

The protein belongs to the gamma-glutamyl phosphate reductase family.

It localises to the cytoplasm. It catalyses the reaction L-glutamate 5-semialdehyde + phosphate + NADP(+) = L-glutamyl 5-phosphate + NADPH + H(+). It participates in amino-acid biosynthesis; L-proline biosynthesis; L-glutamate 5-semialdehyde from L-glutamate: step 2/2. Its function is as follows. Catalyzes the NADPH-dependent reduction of L-glutamate 5-phosphate into L-glutamate 5-semialdehyde and phosphate. The product spontaneously undergoes cyclization to form 1-pyrroline-5-carboxylate. The chain is Gamma-glutamyl phosphate reductase from Streptococcus uberis (strain ATCC BAA-854 / 0140J).